The primary structure comprises 376 residues: S-adenosylmethionine synthase (376 aa).

H14 contacts ATP. A Mg(2+)-binding site is contributed by D16. Residue E42 participates in K(+) binding. 2 residues coordinate L-methionine: E55 and Q98. Positions 98 to 108 (QSPEIALGISS) are flexible loop. ATP-binding positions include 158 to 160 (DGK), 224 to 225 (RF), D233, 239 to 240 (RK), A256, and K260. D233 contacts L-methionine. L-methionine is bound at residue K264.

This sequence belongs to the AdoMet synthase family. Homotetramer; dimer of dimers. Requires Mg(2+) as cofactor. K(+) serves as cofactor.

It localises to the cytoplasm. It carries out the reaction L-methionine + ATP + H2O = S-adenosyl-L-methionine + phosphate + diphosphate. It functions in the pathway amino-acid biosynthesis; S-adenosyl-L-methionine biosynthesis; S-adenosyl-L-methionine from L-methionine: step 1/1. Catalyzes the formation of S-adenosylmethionine (AdoMet) from methionine and ATP. The overall synthetic reaction is composed of two sequential steps, AdoMet formation and the subsequent tripolyphosphate hydrolysis which occurs prior to release of AdoMet from the enzyme. The sequence is that of S-adenosylmethionine synthase from Aquifex aeolicus (strain VF5).